Here is a 396-residue protein sequence, read N- to C-terminus: 1-deoxy-D-xylulose 5-phosphate reductoisomerase (396 aa).

NADPH-binding residues include T13, G14, S15, I16, and N127. Residue K128 coordinates 1-deoxy-D-xylulose 5-phosphate. E129 is a binding site for NADPH. D153 is a binding site for Mn(2+). 4 residues coordinate 1-deoxy-D-xylulose 5-phosphate: S154, E155, S184, and H207. E155 lines the Mn(2+) pocket. G213 is a binding site for NADPH. Residues S220, N225, K226, and E229 each contribute to the 1-deoxy-D-xylulose 5-phosphate site. E229 is a binding site for Mn(2+).

This sequence belongs to the DXR family. Mg(2+) serves as cofactor. Requires Mn(2+) as cofactor.

The catalysed reaction is 2-C-methyl-D-erythritol 4-phosphate + NADP(+) = 1-deoxy-D-xylulose 5-phosphate + NADPH + H(+). It participates in isoprenoid biosynthesis; isopentenyl diphosphate biosynthesis via DXP pathway; isopentenyl diphosphate from 1-deoxy-D-xylulose 5-phosphate: step 1/6. In terms of biological role, catalyzes the NADPH-dependent rearrangement and reduction of 1-deoxy-D-xylulose-5-phosphate (DXP) to 2-C-methyl-D-erythritol 4-phosphate (MEP). In Pseudomonas syringae pv. syringae (strain B728a), this protein is 1-deoxy-D-xylulose 5-phosphate reductoisomerase.